The following is a 188-amino-acid chain: Ribose 1,5-bisphosphate phosphokinase PhnN (188 aa).

9–16 is an ATP binding site; that stretch reads GPSGAGKD.

This sequence belongs to the ribose 1,5-bisphosphokinase family.

It catalyses the reaction alpha-D-ribose 1,5-bisphosphate + ATP = 5-phospho-alpha-D-ribose 1-diphosphate + ADP. It participates in metabolic intermediate biosynthesis; 5-phospho-alpha-D-ribose 1-diphosphate biosynthesis; 5-phospho-alpha-D-ribose 1-diphosphate from D-ribose 5-phosphate (route II): step 3/3. Functionally, catalyzes the phosphorylation of ribose 1,5-bisphosphate to 5-phospho-D-ribosyl alpha-1-diphosphate (PRPP). The sequence is that of Ribose 1,5-bisphosphate phosphokinase PhnN from Pectobacterium atrosepticum (strain SCRI 1043 / ATCC BAA-672) (Erwinia carotovora subsp. atroseptica).